The following is a 766-amino-acid chain: 5-methyltetrahydropteroyltriglutamate--homocysteine methyltransferase (766 aa).

5-methyltetrahydropteroyltri-L-glutamate contacts are provided by residues 16-19 (RELK) and lysine 122. L-homocysteine-binding positions include 443–445 (IGS) and glutamate 496. Residues 443–445 (IGS) and glutamate 496 contribute to the L-methionine site. Residues 527-528 (RC) and tryptophan 573 contribute to the 5-methyltetrahydropteroyltri-L-glutamate site. Residue aspartate 611 participates in L-homocysteine binding. Aspartate 611 is a binding site for L-methionine. Glutamate 617 provides a ligand contact to 5-methyltetrahydropteroyltri-L-glutamate. The Zn(2+) site is built by histidine 653, cysteine 655, and glutamate 677. The active-site Proton donor is the histidine 706. Zn(2+) is bound at residue cysteine 738.

This sequence belongs to the vitamin-B12 independent methionine synthase family. Requires Zn(2+) as cofactor.

It catalyses the reaction 5-methyltetrahydropteroyltri-L-glutamate + L-homocysteine = tetrahydropteroyltri-L-glutamate + L-methionine. It functions in the pathway amino-acid biosynthesis; L-methionine biosynthesis via de novo pathway; L-methionine from L-homocysteine (MetE route): step 1/1. Functionally, catalyzes the transfer of a methyl group from 5-methyltetrahydrofolate to homocysteine resulting in methionine formation. The sequence is that of 5-methyltetrahydropteroyltriglutamate--homocysteine methyltransferase from Pseudomonas putida (strain W619).